A 77-amino-acid polypeptide reads, in one-letter code: UPF0401 protein ECP_3853 (77 aa).

Belongs to the UPF0401 family.

In Escherichia coli O6:K15:H31 (strain 536 / UPEC), this protein is UPF0401 protein ECP_3853.